A 253-amino-acid chain; its full sequence is Large ribosomal subunit protein uL4 (253 aa).

The segment at 62–107 is disordered; it reads WGSGRGVSHVPRLKNSSRAARVPHAKGGRRAHPPKPEADRSEKVNT. The span at 82–94 shows a compositional bias: basic residues; that stretch reads RVPHAKGGRRAHP. Residues 95-107 show a composition bias toward basic and acidic residues; the sequence is PKPEADRSEKVNT.

The protein belongs to the universal ribosomal protein uL4 family. In terms of assembly, part of the 50S ribosomal subunit.

Functionally, one of the primary rRNA binding proteins, this protein initially binds near the 5'-end of the 23S rRNA. It is important during the early stages of 50S assembly. It makes multiple contacts with different domains of the 23S rRNA in the assembled 50S subunit and ribosome. In terms of biological role, forms part of the polypeptide exit tunnel. This Methanosarcina mazei (strain ATCC BAA-159 / DSM 3647 / Goe1 / Go1 / JCM 11833 / OCM 88) (Methanosarcina frisia) protein is Large ribosomal subunit protein uL4.